The following is a 239-amino-acid chain: Enolase-phosphatase E1 (239 aa).

It belongs to the HAD-like hydrolase superfamily. MasA/MtnC family. As to quaternary structure, monomer. Requires Mg(2+) as cofactor.

It carries out the reaction 5-methylsulfanyl-2,3-dioxopentyl phosphate + H2O = 1,2-dihydroxy-5-(methylsulfanyl)pent-1-en-3-one + phosphate. The protein operates within amino-acid biosynthesis; L-methionine biosynthesis via salvage pathway; L-methionine from S-methyl-5-thio-alpha-D-ribose 1-phosphate: step 3/6. It participates in amino-acid biosynthesis; L-methionine biosynthesis via salvage pathway; L-methionine from S-methyl-5-thio-alpha-D-ribose 1-phosphate: step 4/6. Its function is as follows. Bifunctional enzyme that catalyzes the enolization of 2,3-diketo-5-methylthiopentyl-1-phosphate (DK-MTP-1-P) into the intermediate 2-hydroxy-3-keto-5-methylthiopentenyl-1-phosphate (HK-MTPenyl-1-P), which is then dephosphorylated to form the acireductone 1,2-dihydroxy-3-keto-5-methylthiopentene (DHK-MTPene). The protein is Enolase-phosphatase E1 of Streptomyces avermitilis (strain ATCC 31267 / DSM 46492 / JCM 5070 / NBRC 14893 / NCIMB 12804 / NRRL 8165 / MA-4680).